Consider the following 295-residue polypeptide: MKDYVVKATAYDGEVRAIALRATEMVKEACKRQGTWPTASAALGRTMMGGALMASMLKGKDKLTVRIQGNGPIGEIIVDAHASGATRGTVTNPHVSPELNSKGKLDVARVVGTEGTLSVVKDLGMKEPFTGSVPIVSGEIGDDFTYYFANSEQTPSSVGVGVLVNPDESVLAAGGFVIQLLPGAKEATITEIEKRIGETPPISKLVEQGKTPEEIINGLLGEENVKFLETKPVFFECSCSKERIGNAIISLGTKEIEAMITEDGGAETVCHFCNESYSFTEAELKALLEEAESKR.

2 cysteine pairs are disulfide-bonded: Cys237–Cys239 and Cys270–Cys273.

Belongs to the HSP33 family. Post-translationally, under oxidizing conditions two disulfide bonds are formed involving the reactive cysteines. Under reducing conditions zinc is bound to the reactive cysteines and the protein is inactive.

Its subcellular location is the cytoplasm. Its function is as follows. Redox regulated molecular chaperone. Protects both thermally unfolding and oxidatively damaged proteins from irreversible aggregation. Plays an important role in the bacterial defense system toward oxidative stress. This chain is 33 kDa chaperonin, found in Shouchella clausii (strain KSM-K16) (Alkalihalobacillus clausii).